The sequence spans 122 residues: MTQPTIEDTLLRLAAVIDSRKGGDPEQSYVSRLFHKGDDAVLKKIGEEATEVVLAAKDVRQGGAPSALVGEVADLWFHCLVALSHFDLSPADVIAELERREGMSGIEEKALRKRREREENGG.

This sequence belongs to the PRA-PH family.

The protein localises to the cytoplasm. It catalyses the reaction 1-(5-phospho-beta-D-ribosyl)-ATP + H2O = 1-(5-phospho-beta-D-ribosyl)-5'-AMP + diphosphate + H(+). It participates in amino-acid biosynthesis; L-histidine biosynthesis; L-histidine from 5-phospho-alpha-D-ribose 1-diphosphate: step 2/9. This Burkholderia thailandensis (strain ATCC 700388 / DSM 13276 / CCUG 48851 / CIP 106301 / E264) protein is Phosphoribosyl-ATP pyrophosphatase.